A 248-amino-acid chain; its full sequence is tRNA (guanine-N(1)-)-methyltransferase (248 aa).

Residues Gly113 and 133-138 each bind S-adenosyl-L-methionine; that span reads VGDYVL.

It belongs to the RNA methyltransferase TrmD family. As to quaternary structure, homodimer.

The protein resides in the cytoplasm. It carries out the reaction guanosine(37) in tRNA + S-adenosyl-L-methionine = N(1)-methylguanosine(37) in tRNA + S-adenosyl-L-homocysteine + H(+). Functionally, specifically methylates guanosine-37 in various tRNAs. The protein is tRNA (guanine-N(1)-)-methyltransferase of Shewanella sp. (strain ANA-3).